A 533-amino-acid polypeptide reads, in one-letter code: L-aspartate oxidase (533 aa).

FAD contacts are provided by residues 16–19, Lys38, 45–52, and Asp223; these read SGAA and ATFYAQGG. Catalysis depends on Arg290, which acts as the Proton donor/acceptor. FAD is bound by residues Glu375 and 391-392; that span reads SL.

It belongs to the FAD-dependent oxidoreductase 2 family. NadB subfamily. FAD is required as a cofactor.

It is found in the cytoplasm. It carries out the reaction L-aspartate + O2 = iminosuccinate + H2O2. It functions in the pathway cofactor biosynthesis; NAD(+) biosynthesis; iminoaspartate from L-aspartate (oxidase route): step 1/1. In terms of biological role, catalyzes the oxidation of L-aspartate to iminoaspartate, the first step in the de novo biosynthesis of NAD(+). The sequence is that of L-aspartate oxidase (nadB) from Yersinia pestis.